The sequence spans 156 residues: SCP2 sterol-binding domain-containing protein 1 (156 aa).

In terms of domain architecture, SCP2 spans 44-156 (NFSVFEDISQ…ERIFREWAKI (113 aa)).

The protein is SCP2 sterol-binding domain-containing protein 1 (Scp2d1) of Mus musculus (Mouse).